The following is a 588-amino-acid chain: Lysophospholipase 2 (588 aa).

The disordered stretch occupies residues N15 to S38. In terms of domain architecture, PLA2c spans T31–N574. N-linked (GlcNAc...) asparagine glycans are attached at residues N41, N58, N77, N84, N88, N119, N123, N157, N167, N228, N272, N302, N340, N431, N449, N478, N481, N501, N510, N529, N553, N570, and N574.

Belongs to the lysophospholipase family.

The catalysed reaction is a 1-acyl-sn-glycero-3-phosphocholine + H2O = sn-glycerol 3-phosphocholine + a fatty acid + H(+). Functionally, catalyzes the release of fatty acids from lysophospholipids. This Aspergillus fumigatus (strain ATCC MYA-4609 / CBS 101355 / FGSC A1100 / Af293) (Neosartorya fumigata) protein is Lysophospholipase 2 (plb2).